Reading from the N-terminus, the 650-residue chain is Serine/threonine-protein phosphatase with EF-hands 1 (650 aa).

In terms of domain architecture, IQ spans 16-45; the sequence is VIKAALVIQNWYRRYRARLRVRQHYALAIF. The tract at residues 124 to 456 is catalytic; sequence IHILLQAFKQ…PQFFQYQVTS (333 aa). Positions 175, 177, 204, and 236 each coordinate Mn(2+). His-237 (proton donor) is an active-site residue. His-288 lines the Mn(2+) pocket. The disordered stretch occupies residues 315–348; sequence PVLGNQETGEKRNKSASNYVEPRKVEPDKTPSED. Positions 335-348 are enriched in basic and acidic residues; the sequence is EPRKVEPDKTPSED. His-404 provides a ligand contact to Mn(2+). EF-hand domains follow at residues 484-519, 567-602, and 607-642; these read SRKTDLINAFELRDHSRSGRISLAEWAFSMENILGL, RYRSDLKIIFNIIDSDQSGLISMDEFRTMWKLFNAH, and IDDSQIDELASIVDFNKDGNIDFNEFLKAFYVVHKY. 14 residues coordinate Ca(2+): Asp-497, Ser-499, Ser-501, Arg-503, Glu-508, Asp-580, Asp-582, Ser-584, Glu-591, Asp-620, Asn-622, Asp-624, Asn-626, and Glu-631.

This sequence belongs to the PPP phosphatase family. Requires Mn(2+) as cofactor. It depends on Mg(2+) as a cofactor. In the embryo it is almost exclusively expressed in the peripheral nervous system, within sensory neurons of cranial and dorsal root ganglia. Otherwise found in fetal inner ear and a small group of neurons in the midbrain/pons junction.

The enzyme catalyses O-phospho-L-seryl-[protein] + H2O = L-seryl-[protein] + phosphate. The catalysed reaction is O-phospho-L-threonyl-[protein] + H2O = L-threonyl-[protein] + phosphate. With respect to regulation, activated by calcium. In terms of biological role, may have a role in the recovery or adaptation response of photoreceptors. May have a role in diverse sensory neurons and in development. In Mus musculus (Mouse), this protein is Serine/threonine-protein phosphatase with EF-hands 1 (Ppef1).